A 557-amino-acid polypeptide reads, in one-letter code: 2-isopropylmalate synthase (557 aa).

Residues 33–307 (PIWCSSDLRD…DPQLDFSDID (275 aa)) form the Pyruvate carboxyltransferase domain. Mg(2+) contacts are provided by Asp-42, His-246, His-248, and Asn-282. Residues 439–557 (ANAPYALVSH…SLSQQQAKAA (119 aa)) are regulatory domain.

It belongs to the alpha-IPM synthase/homocitrate synthase family. LeuA type 2 subfamily. In terms of assembly, homodimer. It depends on Mg(2+) as a cofactor.

The protein resides in the cytoplasm. It catalyses the reaction 3-methyl-2-oxobutanoate + acetyl-CoA + H2O = (2S)-2-isopropylmalate + CoA + H(+). It participates in amino-acid biosynthesis; L-leucine biosynthesis; L-leucine from 3-methyl-2-oxobutanoate: step 1/4. In terms of biological role, catalyzes the condensation of the acetyl group of acetyl-CoA with 3-methyl-2-oxobutanoate (2-ketoisovalerate) to form 3-carboxy-3-hydroxy-4-methylpentanoate (2-isopropylmalate). This is 2-isopropylmalate synthase from Pseudomonas entomophila (strain L48).